The chain runs to 215 residues: Octanoyltransferase (215 aa).

The region spanning 33–209 is the BPL/LPL catalytic domain; that stretch reads PDTPDQLWLV…QFARKLGYET (177 aa). Residues 72–79, 139–141, and 152–154 each bind substrate; these read RGGQVTYH, SLG, and GLA. The Acyl-thioester intermediate role is filled by C170.

It belongs to the LipB family.

Its subcellular location is the cytoplasm. The enzyme catalyses octanoyl-[ACP] + L-lysyl-[protein] = N(6)-octanoyl-L-lysyl-[protein] + holo-[ACP] + H(+). The protein operates within protein modification; protein lipoylation via endogenous pathway; protein N(6)-(lipoyl)lysine from octanoyl-[acyl-carrier-protein]: step 1/2. In terms of biological role, catalyzes the transfer of endogenously produced octanoic acid from octanoyl-acyl-carrier-protein onto the lipoyl domains of lipoate-dependent enzymes. Lipoyl-ACP can also act as a substrate although octanoyl-ACP is likely to be the physiological substrate. This Cellvibrio japonicus (strain Ueda107) (Pseudomonas fluorescens subsp. cellulosa) protein is Octanoyltransferase.